A 416-amino-acid polypeptide reads, in one-letter code: Meiotically up-regulated protein PB1A10.08 (416 aa).

The protein resides in the cytoplasm. May have a role in meiosis and sporulation. The sequence is that of Meiotically up-regulated protein PB1A10.08 from Schizosaccharomyces pombe (strain 972 / ATCC 24843) (Fission yeast).